The following is a 722-amino-acid chain: Glycine--tRNA ligase beta subunit (722 aa).

This sequence belongs to the class-II aminoacyl-tRNA synthetase family. In terms of assembly, tetramer of two alpha and two beta subunits.

Its subcellular location is the cytoplasm. The enzyme catalyses tRNA(Gly) + glycine + ATP = glycyl-tRNA(Gly) + AMP + diphosphate. The polypeptide is Glycine--tRNA ligase beta subunit (Xylella fastidiosa (strain Temecula1 / ATCC 700964)).